The chain runs to 947 residues: Protein translocase subunit SecA (947 aa).

ATP-binding positions include Gln87, 105 to 109 (GEGKT), and Asp525. Residues 905–928 (PADNADKTARNPNDPSTWGKVGRN) form a disordered region. Residues Cys931, Cys933, Cys942, and His943 each coordinate Zn(2+).

It belongs to the SecA family. Monomer and homodimer. Part of the essential Sec protein translocation apparatus which comprises SecA, SecYEG and auxiliary proteins SecDF-YajC and YidC. It depends on Zn(2+) as a cofactor.

The protein resides in the cell inner membrane. The protein localises to the cytoplasm. It carries out the reaction ATP + H2O + cellular proteinSide 1 = ADP + phosphate + cellular proteinSide 2.. Its function is as follows. Part of the Sec protein translocase complex. Interacts with the SecYEG preprotein conducting channel. Has a central role in coupling the hydrolysis of ATP to the transfer of proteins into and across the cell membrane, serving both as a receptor for the preprotein-SecB complex and as an ATP-driven molecular motor driving the stepwise translocation of polypeptide chains across the membrane. The sequence is that of Protein translocase subunit SecA from Rhodopseudomonas palustris (strain BisB18).